The following is a 296-amino-acid chain: 4-diphosphocytidyl-2-C-methyl-D-erythritol kinase (296 aa).

K18 is a catalytic residue. P103–S113 is an ATP binding site. D146 is an active-site residue.

This sequence belongs to the GHMP kinase family. IspE subfamily.

The enzyme catalyses 4-CDP-2-C-methyl-D-erythritol + ATP = 4-CDP-2-C-methyl-D-erythritol 2-phosphate + ADP + H(+). Its pathway is isoprenoid biosynthesis; isopentenyl diphosphate biosynthesis via DXP pathway; isopentenyl diphosphate from 1-deoxy-D-xylulose 5-phosphate: step 3/6. Catalyzes the phosphorylation of the position 2 hydroxy group of 4-diphosphocytidyl-2C-methyl-D-erythritol. This is 4-diphosphocytidyl-2-C-methyl-D-erythritol kinase from Solidesulfovibrio magneticus (strain ATCC 700980 / DSM 13731 / RS-1) (Desulfovibrio magneticus).